The following is a 207-amino-acid chain: Nitrile hydratase subunit alpha (207 aa).

The Fe(3+) site is built by C110, C113, S114, and C115. At C113 the chain carries Cysteine sulfinic acid (-SO2H). At C115 the chain carries Cysteine sulfenic acid (-SOH).

Belongs to the nitrile hydratase subunit alpha family. As to quaternary structure, heterodimer of an alpha and a beta chain. Fe(3+) is required as a cofactor. Post-translationally, oxidation on Cys-113 is essential for the activity. Oxidation on Cys-115 stabilizes the Fe-NO ligand coordinated in the inactive form.

It catalyses the reaction an aliphatic primary amide = an aliphatic nitrile + H2O. Its activity is regulated as follows. Inactivated by nitrosylation of the iron center in the dark and activated by photo-induced nitric oxide (NO) release. Inactivated by oxidation of Cys-115 to a sulfenic acid. Functionally, NHase catalyzes the hydration of various nitrile compounds to the corresponding amides. Industrial production of acrylamide is now being developed using some of the enzymes of this class. This is Nitrile hydratase subunit alpha (nthA) from Rhodococcus erythropolis (Arthrobacter picolinophilus).